The primary structure comprises 469 residues: Nuclear hormone receptor family member nhr-154 (469 aa).

Residues 80–159 (PSKCLVCRNP…VGMNPMAIQA (80 aa)) constitute a DNA-binding region (nuclear receptor). NR C4-type zinc fingers lie at residues 83–103 (CLVC…CNGC) and 119–142 (CAKQ…CRAC). Residues 230 to 459 (LDSKPVLVVT…KMGTTFRKCI (230 aa)) enclose the NR LBD domain.

This sequence belongs to the nuclear hormone receptor family.

It is found in the nucleus. Functionally, orphan nuclear receptor. This Caenorhabditis elegans protein is Nuclear hormone receptor family member nhr-154 (nhr-154).